The chain runs to 680 residues: Meiotic recombination protein REC8 (680 aa).

Low complexity-rich tracts occupy residues 278–290 (ENDN…GGED) and 436–446 (SLVSTQSSSST). Disordered regions lie at residues 278-297 (ENDN…ENEG), 431-467 (RKRA…YSSD), and 540-560 (EQNF…GSQQ). Residues 550 to 560 (SNSCFSDGSQQ) are compositionally biased toward polar residues.

Belongs to the rad21 family. Post-translationally, proteolytically cleaved by ESP1. In terms of processing, phosphorylated by CDC5. CDC5 phosphorylation is necessary for cleavage by ESP1 and subsequent removal from chromosome arms.

The protein resides in the nucleus. Its subcellular location is the chromosome. The protein localises to the centromere. Its function is as follows. Replaces the SCC1 mitosis-specific cohesin to ensure sister chromatid cohesion during meiosis. Is cleaved by ESP1 shortly before the first meiotic division, and dissociates from chromatin, allowing sister chromatids to segregate. Is protected from cleavage by SPO13. Promotes localization of the LINC complex subunit MPS3 on nuclear envelope in mitotic cells. This is Meiotic recombination protein REC8 from Saccharomyces cerevisiae (strain ATCC 204508 / S288c) (Baker's yeast).